The chain runs to 503 residues: Lysine--tRNA ligase (503 aa).

2 residues coordinate Mg(2+): Glu-414 and Glu-421.

The protein belongs to the class-II aminoacyl-tRNA synthetase family. As to quaternary structure, homodimer. It depends on Mg(2+) as a cofactor.

The protein resides in the cytoplasm. The catalysed reaction is tRNA(Lys) + L-lysine + ATP = L-lysyl-tRNA(Lys) + AMP + diphosphate. The chain is Lysine--tRNA ligase from Neisseria meningitidis serogroup B (strain ATCC BAA-335 / MC58).